A 666-amino-acid polypeptide reads, in one-letter code: Threonine--tRNA ligase (666 aa).

The TGS domain maps to 7-70 (QQVTLTVTLP…TADCTAEIIT (64 aa)). A catalytic region spans residues 253 to 555 (DHRKLGTELE…LIEHTAGNFP (303 aa)). Zn(2+) contacts are provided by Cys351, His402, and His532.

The protein belongs to the class-II aminoacyl-tRNA synthetase family. As to quaternary structure, homodimer. Requires Zn(2+) as cofactor.

It is found in the cytoplasm. It catalyses the reaction tRNA(Thr) + L-threonine + ATP = L-threonyl-tRNA(Thr) + AMP + diphosphate + H(+). Catalyzes the attachment of threonine to tRNA(Thr) in a two-step reaction: L-threonine is first activated by ATP to form Thr-AMP and then transferred to the acceptor end of tRNA(Thr). Also edits incorrectly charged L-seryl-tRNA(Thr). The polypeptide is Threonine--tRNA ligase (Chlorobium phaeovibrioides (strain DSM 265 / 1930) (Prosthecochloris vibrioformis (strain DSM 265))).